The primary structure comprises 70 residues: UPF0434 protein MCA0634 (70 aa).

This sequence belongs to the UPF0434 family.

The chain is UPF0434 protein MCA0634 from Methylococcus capsulatus (strain ATCC 33009 / NCIMB 11132 / Bath).